We begin with the raw amino-acid sequence, 64 residues long: Large ribosomal subunit protein uL29 (64 aa).

It belongs to the universal ribosomal protein uL29 family.

This is Large ribosomal subunit protein uL29 from Pseudomonas entomophila (strain L48).